The primary structure comprises 128 residues: Small ribosomal subunit protein uS12 (128 aa).

3-methylthioaspartic acid is present on aspartate 89.

This sequence belongs to the universal ribosomal protein uS12 family. Part of the 30S ribosomal subunit. Contacts proteins S8 and S17. May interact with IF1 in the 30S initiation complex.

With S4 and S5 plays an important role in translational accuracy. In terms of biological role, interacts with and stabilizes bases of the 16S rRNA that are involved in tRNA selection in the A site and with the mRNA backbone. Located at the interface of the 30S and 50S subunits, it traverses the body of the 30S subunit contacting proteins on the other side and probably holding the rRNA structure together. The combined cluster of proteins S8, S12 and S17 appears to hold together the shoulder and platform of the 30S subunit. The sequence is that of Small ribosomal subunit protein uS12 from Campylobacter jejuni subsp. jejuni serotype O:6 (strain 81116 / NCTC 11828).